A 601-amino-acid chain; its full sequence is MTVDRNYIRNFSIVAHIDHGKSTLADRLIQMTGGLETREMKEQVLDSMDIERERGITIKAQTVRLHYKAKNGETYILNLIDTPGHVDFAYEVSRSLAACEGSLLVVDASQGVEAQTLANVYQAIDNSHELVVVLNKVDLPAAEPERVKEQIEDVIGIDTSEAVEISAKTGFGVPDVLEAIVRQLPPPHIGDVKNPLKVMLVDSWYDAYLGVIVLVRVIDGILKKGQIIRMMGTGVKYLVERVGVFTPKMVQVDTLGPGEIGFITASIKEVADTRVGDTITEERRPCENALPGFKPAQPVVFCGIFPIDAADFDGLRAAMGKLRLNDASFSFEMETSAALGFGFRCGFLGLLHLEIIQERLEREFNLDLIATAPSVVYRMNMNNGSVKELHNPADMPDLVKVSSIEEPWIRATIMTPDDYLGAILELCQERRGIQVGLSYVGTRAMVTYNLPLNEVVFDFYDRLKSISKGYASFDYQMTDYSEGDLVKMSILVNGESIDALSMLVHRTVAEKRGRSMCEKLKDLIPQHMFQIPIQAAIGGKIIARETIRALRKDVTAKCYGGDVTRKRKLLEKQKEGKKRMRQFGKVEIPQSAFIEALKMSK.

Residues 6-188 (NYIRNFSIVA…AIVRQLPPPH (183 aa)) form the tr-type G domain. GTP-binding positions include 18–23 (DHGKST) and 135–138 (NKVD).

It belongs to the TRAFAC class translation factor GTPase superfamily. Classic translation factor GTPase family. LepA subfamily.

It localises to the cell inner membrane. The enzyme catalyses GTP + H2O = GDP + phosphate + H(+). Functionally, required for accurate and efficient protein synthesis under certain stress conditions. May act as a fidelity factor of the translation reaction, by catalyzing a one-codon backward translocation of tRNAs on improperly translocated ribosomes. Back-translocation proceeds from a post-translocation (POST) complex to a pre-translocation (PRE) complex, thus giving elongation factor G a second chance to translocate the tRNAs correctly. Binds to ribosomes in a GTP-dependent manner. The polypeptide is Elongation factor 4 (Bartonella quintana (strain Toulouse) (Rochalimaea quintana)).